The primary structure comprises 102 residues: Small ribosomal subunit protein uS10 (102 aa).

This sequence belongs to the universal ribosomal protein uS10 family. As to quaternary structure, part of the 30S ribosomal subunit.

Functionally, involved in the binding of tRNA to the ribosomes. The sequence is that of Small ribosomal subunit protein uS10 from Lactiplantibacillus plantarum (strain ATCC BAA-793 / NCIMB 8826 / WCFS1) (Lactobacillus plantarum).